A 105-amino-acid chain; its full sequence is Large ribosomal subunit protein bL21 (105 aa).

The protein belongs to the bacterial ribosomal protein bL21 family. In terms of assembly, part of the 50S ribosomal subunit. Contacts protein L20.

In terms of biological role, this protein binds to 23S rRNA in the presence of protein L20. This Dictyoglomus thermophilum (strain ATCC 35947 / DSM 3960 / H-6-12) protein is Large ribosomal subunit protein bL21.